The sequence spans 167 residues: MIRLSLFISLLLTSVAVLADVQINIRGNVYIPPCTINNGQNIVVDFGNINPEHVDNSRGEVTKTISISCPYKSGSLWIKVTGNTMGGGQNNVLATNITHFGIALYQGKGMSTPLILGNGSGNGYGVTAGLDTARSTFTFTSVPFRNGSGILNGGDFQTTASMSMIYN.

Positions 1–18 (MIRLSLFISLLLTSVAVL) are cleaved as a signal peptide.

Its subcellular location is the secreted. The protein resides in the fimbrium. In terms of biological role, adapter that links the PapG adhesin to the distal end of the tip fibrillum. PapF is required for the correct presentation of the adhesin at the distal end of the tip fibrillum. Pili are polar filaments radiating from the surface of the bacterium to a length of 0.5-1.5 micrometers and numbering 100-300 per cell, and enable bacteria to colonize the epithelium of specific host organs. The polypeptide is Fimbrial adapter PapF (papF) (Escherichia coli).